The sequence spans 274 residues: Type II restriction enzyme HgiEI (274 aa).

This sequence belongs to the TdeIII type II restriction endonuclease family.

It carries out the reaction Endonucleolytic cleavage of DNA to give specific double-stranded fragments with terminal 5'-phosphates.. Its function is as follows. A P subtype restriction enzyme that recognizes the double-stranded sequence 5'-GGWCC-3' and cleaves after G-1. This system is more active than isoschizomeric RM.HgiBI. This is Type II restriction enzyme HgiEI from Herpetosiphon aurantiacus (Herpetosiphon giganteus).